Consider the following 39-residue polypeptide: Large ribosomal subunit protein bL36 (39 aa).

This sequence belongs to the bacterial ribosomal protein bL36 family.

In Leuconostoc mesenteroides subsp. mesenteroides (strain ATCC 8293 / DSM 20343 / BCRC 11652 / CCM 1803 / JCM 6124 / NCDO 523 / NBRC 100496 / NCIMB 8023 / NCTC 12954 / NRRL B-1118 / 37Y), this protein is Large ribosomal subunit protein bL36.